A 359-amino-acid chain; its full sequence is MSGKRSYQDDQLDVEEANKRHQMVDTLLRGSEDKDGDNDNSVYDDLLQDPEEVEKENKENRDGDKVGDDEHDVVKGESEGQAAEQSSADQNDENINVDVDPSVTAVARAAQHASQRREAGDEDEDEDEEEEEDEDDHVDIDDVDKDPDAVIDEDDDEEDEDQAQRRRGKKNIEGTGESNDSERATKIGESGSSNETAGADGSGDREDGSQPDGTEHDDEENGGAGAGGAAPRRGRKPGTETGSTAWKQQRKESHKEVERRRRQNINTAIEKLSDLLPVKETSKAAILSRAAEYIQKMKETETANIEKWTLQKLLGEQQVSSLTSANDKLEQELSKAYKNLEELKKKLKEAGIEDPTEEE.

The disordered stretch occupies residues 1–262 (MSGKRSYQDD…SHKEVERRRR (262 aa)). Positions 55–78 (KENKENRDGDKVGDDEHDVVKGES) are enriched in basic and acidic residues. Acidic residues predominate over residues 120–161 (GDEDEDEDEEEEEDEDDHVDIDDVDKDPDAVIDEDDDEEDED). Residues 249-259 (QRKESHKEVER) show a composition bias toward basic and acidic residues. In terms of domain architecture, bHLH spans 249–297 (QRKESHKEVERRRRQNINTAIEKLSDLLPVKETSKAAILSRAAEYIQKM).

Binds DNA as a dimer.

Its subcellular location is the nucleus. The protein resides in the chromosome. It is found in the centromere. Required for chromosome stability and methionine prototrophy. It is involved in chromosomal segregation. Binds to a highly conserved DNA sequence (5'-RTCACRTG-3'), called CDEI, found in centromeres and in several promoters. This Kluyveromyces lactis (strain ATCC 8585 / CBS 2359 / DSM 70799 / NBRC 1267 / NRRL Y-1140 / WM37) (Yeast) protein is Centromere-binding protein 1 (CBF1).